The sequence spans 740 residues: 1,4-alpha-glucan branching enzyme GlgB (740 aa).

Aspartate 419 (nucleophile) is an active-site residue. The active-site Proton donor is glutamate 472.

Belongs to the glycosyl hydrolase 13 family. GlgB subfamily. Monomer.

The catalysed reaction is Transfers a segment of a (1-&gt;4)-alpha-D-glucan chain to a primary hydroxy group in a similar glucan chain.. It functions in the pathway glycan biosynthesis; glycogen biosynthesis. Functionally, catalyzes the formation of the alpha-1,6-glucosidic linkages in glycogen by scission of a 1,4-alpha-linked oligosaccharide from growing alpha-1,4-glucan chains and the subsequent attachment of the oligosaccharide to the alpha-1,6 position. The polypeptide is 1,4-alpha-glucan branching enzyme GlgB (Paramagnetospirillum magneticum (strain ATCC 700264 / AMB-1) (Magnetospirillum magneticum)).